A 752-amino-acid chain; its full sequence is Protein WEAK CHLOROPLAST MOVEMENT UNDER BLUE LIGHT-like 2 (752 aa).

The residue at position 143 (Ser143) is a Phosphoserine. Coiled coils occupy residues 186–557 and 596–651; these read ERRK…SRAS and ELSK…KEAM. A disordered region spans residues 476-495; that stretch reads KHDLSETRQRNREDTREEKC. Residues 653 to 675 show a composition bias toward basic and acidic residues; that stretch reads KVEKARDGKVGMDHELRKWRSDN. Residues 653-733 are disordered; sequence KVEKARDGKV…ETETKKKKKR (81 aa). Positions 690–723 are enriched in polar residues; sequence KSKSALHQPTTFTFGEQASSSNVTPQASSSNVTP.

Belongs to the WEB family.

This Arabidopsis thaliana (Mouse-ear cress) protein is Protein WEAK CHLOROPLAST MOVEMENT UNDER BLUE LIGHT-like 2 (WEL2).